Consider the following 260-residue polypeptide: Hydroxyacylglutathione hydrolase (260 aa).

The Zn(2+) site is built by His-66, His-68, Asp-70, His-71, His-125, Asp-150, and His-188.

The protein belongs to the metallo-beta-lactamase superfamily. Glyoxalase II family. In terms of assembly, monomer. Requires Zn(2+) as cofactor.

The enzyme catalyses an S-(2-hydroxyacyl)glutathione + H2O = a 2-hydroxy carboxylate + glutathione + H(+). It participates in secondary metabolite metabolism; methylglyoxal degradation; (R)-lactate from methylglyoxal: step 2/2. In terms of biological role, thiolesterase that catalyzes the hydrolysis of S-D-lactoyl-glutathione to form glutathione and D-lactic acid. The chain is Hydroxyacylglutathione hydrolase from Prochlorococcus marinus (strain MIT 9303).